The following is a 197-amino-acid chain: Transcription factor FapR (197 aa).

It belongs to the FapR family.

Functionally, transcriptional factor involved in regulation of membrane lipid biosynthesis by repressing genes involved in fatty acid and phospholipid metabolism. This chain is Transcription factor FapR, found in Bacillus cereus (strain 03BB102).